Consider the following 168-residue polypeptide: Peptide deformylase 2 (168 aa).

Residues C91 and H133 each contribute to the Fe cation site. E134 is a catalytic residue. Fe cation is bound at residue H137.

Belongs to the polypeptide deformylase family. Fe(2+) is required as a cofactor.

It carries out the reaction N-terminal N-formyl-L-methionyl-[peptide] + H2O = N-terminal L-methionyl-[peptide] + formate. Its function is as follows. Removes the formyl group from the N-terminal Met of newly synthesized proteins. Requires at least a dipeptide for an efficient rate of reaction. N-terminal L-methionine is a prerequisite for activity but the enzyme has broad specificity at other positions. In Vibrio parahaemolyticus serotype O3:K6 (strain RIMD 2210633), this protein is Peptide deformylase 2.